A 259-amino-acid chain; its full sequence is Eukaryotic translation initiation factor 3 subunit J (259 aa).

The span at Met-1 to Ser-12 shows a compositional bias: low complexity. Positions Met-1 to Val-70 are sufficient for interaction with EIF3B. A disordered region spans residues Met-1–Pro-111. Phosphoserine is present on residues Ser-12, Ser-14, and Ser-21. Residues Glu-41–Lys-60 show a composition bias toward acidic residues. Over residues Lys-61–Lys-107 the composition is skewed to basic and acidic residues. Residues Lys-71 to Thr-136 adopt a coiled-coil conformation. Residue Lys-107 forms a Glycyl lysine isopeptide (Lys-Gly) (interchain with G-Cter in SUMO2) linkage. The residue at position 110 (Thr-110) is a Phosphothreonine. Ser-128 bears the Phosphoserine mark. The tract at residues Ser-218–Tyr-247 is disordered. The interval Tyr-244–Met-259 is promotes stable association with the 40S ribosome. A Phosphotyrosine modification is found at Tyr-255.

Belongs to the eIF-3 subunit J family. As to quaternary structure, component of the eukaryotic translation initiation factor 3 (eIF-3) complex, which is composed of 13 subunits: EIF3A, EIF3B, EIF3C, EIF3D, EIF3E, EIF3F, EIF3G, EIF3H, EIF3I, EIF3J, EIF3K, EIF3L and EIF3M. The eIF-3 complex appears to include 3 stable modules: module A is composed of EIF3A, EIF3B, EIF3G and EIF3I; module B is composed of EIF3F, EIF3H, and EIF3M; and module C is composed of EIF3C, EIF3D, EIF3E, EIF3K and EIF3L. EIF3C of module C binds EIF3B of module A and EIF3H of module B, thereby linking the three modules. EIF3J is a labile subunit that binds to the eIF-3 complex via EIF3B. The eIF-3 complex interacts with RPS6KB1 under conditions of nutrient depletion. Mitogenic stimulation leads to binding and activation of a complex composed of MTOR and RPTOR, leading to phosphorylation and release of RPS6KB1 and binding of EIF4B to eIF-3. Post-translationally, phosphorylated. Phosphorylation is enhanced upon serum stimulation.

The protein localises to the cytoplasm. Functionally, component of the eukaryotic translation initiation factor 3 (eIF-3) complex, which is required for several steps in the initiation of protein synthesis. The eIF-3 complex associates with the 40S ribosome and facilitates the recruitment of eIF-1, eIF-1A, eIF-2:GTP:methionyl-tRNAi and eIF-5 to form the 43S pre-initiation complex (43S PIC). The eIF-3 complex stimulates mRNA recruitment to the 43S PIC and scanning of the mRNA for AUG recognition. The eIF-3 complex is also required for disassembly and recycling of post-termination ribosomal complexes and subsequently prevents premature joining of the 40S and 60S ribosomal subunits prior to initiation. The eIF-3 complex specifically targets and initiates translation of a subset of mRNAs involved in cell proliferation, including cell cycling, differentiation and apoptosis, and uses different modes of RNA stem-loop binding to exert either translational activation or repression. This subunit binds directly within the mRNA entry channel of the 40S ribosome to the aminoacyl (A) site. It may regulate the interaction between the 43S PIC and mRNA. The sequence is that of Eukaryotic translation initiation factor 3 subunit J from Pongo abelii (Sumatran orangutan).